The sequence spans 339 residues: Putative clathrin assembly protein At1g14686 (339 aa).

The 133-residue stretch at 16–148 (SLIAADDILT…ILFHDGNRHR (133 aa)) folds into the ENTH domain. The disordered stretch occupies residues 283 to 307 (ESSEESAERTEIAEEEEEEEEEIET). Acidic residues predominate over residues 295 to 305 (AEEEEEEEEEI).

Its subcellular location is the membrane. It localises to the clathrin-coated pit. It is found in the golgi apparatus. The protein localises to the cytoplasmic vesicle. The protein resides in the clathrin-coated vesicle. The polypeptide is Putative clathrin assembly protein At1g14686 (Arabidopsis thaliana (Mouse-ear cress)).